The primary structure comprises 206 residues: Guanylate kinase (206 aa).

Residues 6-185 enclose the Guanylate kinase-like domain; that stretch reads GAILVLSGPS…AAKTLRIIAD (180 aa). Residue 13–20 coordinates ATP; the sequence is GPSGAGKS.

The protein belongs to the guanylate kinase family.

The protein localises to the cytoplasm. It carries out the reaction GMP + ATP = GDP + ADP. Essential for recycling GMP and indirectly, cGMP. The polypeptide is Guanylate kinase (Sulfurimonas denitrificans (strain ATCC 33889 / DSM 1251) (Thiomicrospira denitrificans (strain ATCC 33889 / DSM 1251))).